Consider the following 180-residue polypeptide: Ribonuclease M5 (180 aa).

Residues 5-90 (KQIIIVEGKT…NAFIKKDDIS (86 aa)) form the Toprim domain. Mg(2+)-binding residues include glutamate 11, aspartate 59, and aspartate 61.

It belongs to the ribonuclease M5 family. The cofactor is Mg(2+).

Its subcellular location is the cytoplasm. It carries out the reaction Endonucleolytic cleavage of RNA, removing 21 and 42 nucleotides, respectively, from the 5'- and 3'-termini of a 5S-rRNA precursor.. Its function is as follows. Required for correct processing of both the 5' and 3' ends of 5S rRNA precursor. Cleaves both sides of a double-stranded region yielding mature 5S rRNA in one step. The sequence is that of Ribonuclease M5 from Mycoplasma capricolum subsp. capricolum (strain California kid / ATCC 27343 / NCTC 10154).